The following is a 536-amino-acid chain: Caspase recruitment domain-containing protein 9 (536 aa).

Ser-2 carries the phosphoserine modification. The Zn(2+) site is built by Asp-3, Cys-10, and His-73. Positions 6 to 98 constitute a CARD domain; it reads NDDECWSALE…QLYRKVTGKE (93 aa). The segment at 99-116 is linker; that stretch reads PARVFSMIIDASGESGLT. Coiled-coil stretches lie at residues 117-277 and 303-420; these read QLLM…HRNS and SLRK…QLDM. A Glycyl lysine isopeptide (Lys-Gly) (interchain with G-Cter in ubiquitin) cross-link involves residue Lys-125. The residue at position 231 (Thr-231) is a Phosphothreonine. Position 277 is a phosphoserine (Ser-277). 7 positions are modified to phosphoserine: Ser-424, Ser-425, Ser-431, Ser-451, Ser-461, Ser-483, and Ser-498. Residues 425-451 are disordered; it reads SDLEDSSPRNSQELSLPQDLEEDAQLS. Positions 472–536 are disordered; sequence KHLSQTHDTV…GSDNTDTEGS (65 aa). Positions 487–502 are enriched in basic and acidic residues; it reads PPEKERRRLKESFENY. Phosphothreonine; by CK2 is present on residues Thr-531 and Thr-533.

In terms of assembly, monomer. Homodimer; homodimerization is mediated by the CARD domain which forms an extensive interaction with the adjacent linker and coiled-coil regions; leads to an autoinhibited state. Homomultimer; polymerizes following activation, forming a nucleating helical template that seeds BCL10-filament formation via a CARD-CARD interaction. Interacts (via CARD domain) with BCL10 (via CARD domain); interaction takes place following CARD9 activation and polymerization, leading to the formation of a filamentous CBM complex assembly. Component of a CBM complex (CARD9-BCL10, MALT1), composed of CARD9, BCL10 and MALT1. Interacts with RASGRF1. Interacts with NOD2 (via NACHT domain); interaction is direct. Interacts with RIPK2. Interacts with VHL; without leading to protein degradation. Phosphorylated at Thr-231 by PRKCD downstream of C-type lectin receptors activation: phosphorylation promotes interaction with BCL10, followed by activation of NF-kappa-B and MAP kinase p38 pathways. Phosphorylated at Thr-531 and Thr-533 by CK2 following interaction with VHL, leading to inhibit the ability to activate NF-kappa-B. In terms of processing, ubiquitinated at Lys-125 via 'Lys-27'-linked ubiquitin by TRIM62 downstream of C-type lectin receptors activation; leading to CARD9 activation, followed by activation of NF-kappa-B and MAP kinase p38 pathways. Deubiquitinated at Lys-125 by USP15, inhibiting CARD9.

The protein localises to the cytoplasm. With respect to regulation, maintained in an autoinhibited state via homodimerization in which the CARD domain forms an extensive interaction with the adjacent linker and coiled-coil regions. Activation downstream of C-type lectin receptors, by phosphorylation by PRKCD and/or ubiquitination by TRIM62, triggers disruption of the CARD domain-coiled coil interface, CARD9 homooligomerization and BCL10 recruitment, followed by activation of NF-kappa-B and MAP kinase p38 pathways. Zinc-binding inhibits activation by stabilizing the CARD ground-state conformation and restricting its capacity to form BCL10-nucleating filaments. Adapter protein that plays a key role in innate immune response against fungi by forming signaling complexes downstream of C-type lectin receptors. CARD9-mediated signals are essential for antifungal immunity against a subset of fungi from the phylum Ascomycota. Transduces signals in myeloid cells downstream of C-type lectin receptors CLEC7A (dectin-1), CLEC6A (dectin-2) and CLEC4E (Mincle), which detect pathogen-associated molecular pattern metabolites (PAMPs), such as fungal carbohydrates, and trigger CARD9 activation. Upon activation, CARD9 homooligomerizes to form a nucleating helical template that recruits BCL10 via CARD-CARD interaction, thereby promoting polymerization of BCL10 and subsequent recruitment of MALT1: this leads to activation of NF-kappa-B and MAP kinase p38 (MAPK11, MAPK12, MAPK13 and/or MAPK14) pathways which stimulate expression of genes encoding pro-inflammatory cytokines and chemokines. CARD9 signaling in antigen-presenting cells links innate sensing of fungi to the activation of adaptive immunity and provides a cytokine milieu that induces the development and subsequent of interleukin 17-producing T helper (Th17) cells. Also involved in activation of myeloid cells via classical ITAM-associated receptors and TLR: required for TLR-mediated activation of MAPK, while it is not required for TLR-induced activation of NF-kappa-B. CARD9 can also be engaged independently of BCL10: forms a complex with RASGRF1 downstream of C-type lectin receptors, which recruits and activates HRAS, leading to ERK activation and the production of cytokines. Acts as an important regulator of the intestinal commensal fungi (mycobiota) component of the gut microbiota. Plays an essential role in antifungal immunity against dissemination of gut fungi: acts by promoting induction of antifungal IgG antibodies response in CX3CR1(+) macrophages to confer protection against disseminated C.albicans or C.auris infection. Also mediates immunity against other pathogens, such as certain bacteria, viruses and parasites; CARD9 signaling is however redundant with other innate immune responses. In response to L.monocytogenes infection, required for the production of inflammatory cytokines activated by intracellular peptidoglycan: acts by connecting NOD2 recognition of peptidoglycan to downstream activation of MAP kinases (MAPK) without activating NF-kappa-B. In Rattus norvegicus (Rat), this protein is Caspase recruitment domain-containing protein 9.